Here is a 320-residue protein sequence, read N- to C-terminus: Aspartate carbamoyltransferase catalytic subunit (320 aa).

2 residues coordinate carbamoyl phosphate: Arg-58 and Thr-59. Lys-86 contributes to the L-aspartate binding site. Carbamoyl phosphate contacts are provided by Arg-108, His-136, and Gln-139. Arg-169 and Arg-223 together coordinate L-aspartate. Positions 264 and 265 each coordinate carbamoyl phosphate.

It belongs to the aspartate/ornithine carbamoyltransferase superfamily. ATCase family. As to quaternary structure, heterododecamer (2C3:3R2) of six catalytic PyrB chains organized as two trimers (C3), and six regulatory PyrI chains organized as three dimers (R2).

It catalyses the reaction carbamoyl phosphate + L-aspartate = N-carbamoyl-L-aspartate + phosphate + H(+). Its pathway is pyrimidine metabolism; UMP biosynthesis via de novo pathway; (S)-dihydroorotate from bicarbonate: step 2/3. Its function is as follows. Catalyzes the condensation of carbamoyl phosphate and aspartate to form carbamoyl aspartate and inorganic phosphate, the committed step in the de novo pyrimidine nucleotide biosynthesis pathway. The protein is Aspartate carbamoyltransferase catalytic subunit of Cereibacter sphaeroides (strain ATCC 17025 / ATH 2.4.3) (Rhodobacter sphaeroides).